A 719-amino-acid polypeptide reads, in one-letter code: ATP-dependent RNA helicase p62 (719 aa).

A disordered region spans residues 94–234 (AQSQRAFRDS…GSQDLPMRPV (141 aa)). Basic and acidic residues-rich tracts occupy residues 99 to 108 (AFRDSSKPDS) and 137 to 171 (EEIK…DRRG). Gly residues predominate over residues 172–188 (GGGGGNRFGGGGGGGDY). Basic and acidic residues predominate over residues 194–205 (GRVEKRRDDRGG). The segment covering 206-226 (GNRFGGGGGFGDRRGGGGGGS) has biased composition (gly residues). The short motif at 281 to 309 (QDFSEVHLPDYVMKEIRRQGYKAPTAIQA) is the Q motif element. In terms of domain architecture, Helicase ATP-binding spans 312-487 (WPIAMSGSNF…EDFLGNYIQI (176 aa)). ATP is bound at residue 325 to 332 (AKTGSGKT). The short motif at 435–438 (DEAD) is the DEAD box element. The Helicase C-terminal domain maps to 519–664 (LLSDIYDTSE…EINPALENLA (146 aa)). Residues 689-719 (GGGFKKGSLSNGRGFGGGGGGGGEGRHSRFD) are disordered. The segment covering 701-711 (RGFGGGGGGGG) has biased composition (gly residues).

This sequence belongs to the DEAD box helicase family. DDX5/DBP2 subfamily. In terms of assembly, interacts with Fmr1 to form the RNA-induced silencing complex (RISC), a ribonucleoprotein (RNP) complex involved in translation regulation, other components of the complex are RpL5, RpL11, AGO2 and Dcr-1.

The protein resides in the nucleus. It localises to the nucleolus. It is found in the cytoplasm. The protein localises to the cytosol. The catalysed reaction is ATP + H2O = ADP + phosphate + H(+). In terms of biological role, as an RNA helicase, unwinds RNA and alters RNA structures through ATP binding and hydrolysis. Involved in multiple cellular processes, including pre-mRNA splicing, alternative splicing, rRNA processing and miRNA processing, as well as transcription regulation. Plays a role in innate immunity. Specifically restricts bunyavirus infection, including Rift Valley fever virus (RVFV) or La Crosse virus (LACV), but not vesicular stomatitis virus (VSV), in an interferon- and DROSHA-independent manner. This chain is ATP-dependent RNA helicase p62 (Rm62), found in Drosophila melanogaster (Fruit fly).